An 84-amino-acid polypeptide reads, in one-letter code: Small ribosomal subunit protein bS16 (84 aa).

It belongs to the bacterial ribosomal protein bS16 family.

The polypeptide is Small ribosomal subunit protein bS16 (Koribacter versatilis (strain Ellin345)).